Consider the following 648-residue polypeptide: Acetyl-coenzyme A synthetase (648 aa).

CoA is bound by residues 190–193 (RGGR) and threonine 310. ATP contacts are provided by residues 386–388 (GEP), 410–415 (DTWWQT), aspartate 499, and arginine 514. Residue serine 522 participates in CoA binding. Residue arginine 525 coordinates ATP. Mg(2+) is bound by residues valine 536, histidine 538, and valine 541. Residue arginine 583 coordinates CoA. Lysine 608 is subject to N6-acetyllysine.

This sequence belongs to the ATP-dependent AMP-binding enzyme family. It depends on Mg(2+) as a cofactor. Acetylated. Deacetylation by the SIR2-homolog deacetylase activates the enzyme.

The enzyme catalyses acetate + ATP + CoA = acetyl-CoA + AMP + diphosphate. Functionally, catalyzes the conversion of acetate into acetyl-CoA (AcCoA), an essential intermediate at the junction of anabolic and catabolic pathways. AcsA undergoes a two-step reaction. In the first half reaction, AcsA combines acetate with ATP to form acetyl-adenylate (AcAMP) intermediate. In the second half reaction, it can then transfer the acetyl group from AcAMP to the sulfhydryl group of CoA, forming the product AcCoA. The chain is Acetyl-coenzyme A synthetase from Methylobacterium radiotolerans (strain ATCC 27329 / DSM 1819 / JCM 2831 / NBRC 15690 / NCIMB 10815 / 0-1).